A 475-amino-acid chain; its full sequence is Ribulose bisphosphate carboxylase large chain (475 aa).

Positions 1 to 2 (MS) are excised as a propeptide. At Pro-3 the chain carries N-acetylproline. Lys-14 is subject to N6,N6,N6-trimethyllysine. Asn-123 and Thr-173 together coordinate substrate. Lys-175 serves as the catalytic Proton acceptor. Lys-177 provides a ligand contact to substrate. Mg(2+) is bound by residues Lys-201, Asp-203, and Glu-204. Lys-201 carries the N6-carboxylysine modification. Residue His-294 is the Proton acceptor of the active site. Arg-295, His-327, and Ser-379 together coordinate substrate.

The protein belongs to the RuBisCO large chain family. Type I subfamily. In terms of assembly, heterohexadecamer of 8 large chains and 8 small chains; disulfide-linked. The disulfide link is formed within the large subunit homodimers. Mg(2+) serves as cofactor. The disulfide bond which can form in the large chain dimeric partners within the hexadecamer appears to be associated with oxidative stress and protein turnover.

The protein resides in the plastid. It is found in the chloroplast. It carries out the reaction 2 (2R)-3-phosphoglycerate + 2 H(+) = D-ribulose 1,5-bisphosphate + CO2 + H2O. The enzyme catalyses D-ribulose 1,5-bisphosphate + O2 = 2-phosphoglycolate + (2R)-3-phosphoglycerate + 2 H(+). Functionally, ruBisCO catalyzes two reactions: the carboxylation of D-ribulose 1,5-bisphosphate, the primary event in carbon dioxide fixation, as well as the oxidative fragmentation of the pentose substrate in the photorespiration process. Both reactions occur simultaneously and in competition at the same active site. The protein is Ribulose bisphosphate carboxylase large chain of Pinus thunbergii (Japanese black pine).